A 381-amino-acid polypeptide reads, in one-letter code: Deoxyguanosinetriphosphate triphosphohydrolase-like protein (381 aa).

One can recognise an HD domain in the interval Arg76 to Thr203.

Belongs to the dGTPase family. Type 2 subfamily.

In Leptospira interrogans serogroup Icterohaemorrhagiae serovar copenhageni (strain Fiocruz L1-130), this protein is Deoxyguanosinetriphosphate triphosphohydrolase-like protein.